The sequence spans 269 residues: Energy-coupling factor transporter ATP-binding protein EcfA1 (269 aa).

In terms of domain architecture, ABC transporter spans 8-242 (IVFKNVSFQY…AEGLTTIGLD (235 aa)). 42 to 49 (GHNGSGKS) lines the ATP pocket.

The protein belongs to the ABC transporter superfamily. Energy-coupling factor EcfA family. In terms of assembly, forms a stable energy-coupling factor (ECF) transporter complex composed of 2 membrane-embedded substrate-binding proteins (S component), 2 ATP-binding proteins (A component) and 2 transmembrane proteins (T component).

It localises to the cell membrane. ATP-binding (A) component of a common energy-coupling factor (ECF) ABC-transporter complex. Unlike classic ABC transporters this ECF transporter provides the energy necessary to transport a number of different substrates. The protein is Energy-coupling factor transporter ATP-binding protein EcfA1 of Staphylococcus aureus (strain bovine RF122 / ET3-1).